We begin with the raw amino-acid sequence, 493 residues long: Glutamate--tRNA ligase (493 aa).

The 'HIGH' region motif lies at 10–20 (PSPTGDPHVGT). The 'KMSKS' region motif lies at 251–255 (KLSKR). An ATP-binding site is contributed by Lys254.

It belongs to the class-I aminoacyl-tRNA synthetase family. Glutamate--tRNA ligase type 1 subfamily. As to quaternary structure, monomer.

The protein localises to the cytoplasm. It catalyses the reaction tRNA(Glu) + L-glutamate + ATP = L-glutamyl-tRNA(Glu) + AMP + diphosphate. Catalyzes the attachment of glutamate to tRNA(Glu) in a two-step reaction: glutamate is first activated by ATP to form Glu-AMP and then transferred to the acceptor end of tRNA(Glu). This is Glutamate--tRNA ligase from Pseudomonas putida (strain ATCC 700007 / DSM 6899 / JCM 31910 / BCRC 17059 / LMG 24140 / F1).